The following is a 220-amino-acid chain: Redox-sensing transcriptional repressor Rex (220 aa).

The H-T-H motif DNA-binding region spans 25–64 (WYLSNVKLLKQRGERFVSSTQISKEINIDASQIAKDLSYV). 99 to 104 (GVGSLG) provides a ligand contact to NAD(+).

The protein belongs to the transcriptional regulatory Rex family. In terms of assembly, homodimer.

The protein resides in the cytoplasm. Modulates transcription in response to changes in cellular NADH/NAD(+) redox state. In Bacteroides thetaiotaomicron (strain ATCC 29148 / DSM 2079 / JCM 5827 / CCUG 10774 / NCTC 10582 / VPI-5482 / E50), this protein is Redox-sensing transcriptional repressor Rex.